A 345-amino-acid chain; its full sequence is Probable dual-specificity RNA methyltransferase RlmN (345 aa).

Residue E90 is the Proton acceptor of the active site. In terms of domain architecture, Radical SAM core spans 96 to 326 (YDYGNSICIS…STIRKEMGAD (231 aa)). C103 and C331 are disulfide-bonded. Residues C110, C114, and C117 each coordinate [4Fe-4S] cluster. S-adenosyl-L-methionine is bound by residues 157–158 (GE), S189, 212–214 (SLH), and N288. Residue C331 is the S-methylcysteine intermediate of the active site.

It belongs to the radical SAM superfamily. RlmN family. It depends on [4Fe-4S] cluster as a cofactor.

It localises to the cytoplasm. It catalyses the reaction adenosine(2503) in 23S rRNA + 2 reduced [2Fe-2S]-[ferredoxin] + 2 S-adenosyl-L-methionine = 2-methyladenosine(2503) in 23S rRNA + 5'-deoxyadenosine + L-methionine + 2 oxidized [2Fe-2S]-[ferredoxin] + S-adenosyl-L-homocysteine. The enzyme catalyses adenosine(37) in tRNA + 2 reduced [2Fe-2S]-[ferredoxin] + 2 S-adenosyl-L-methionine = 2-methyladenosine(37) in tRNA + 5'-deoxyadenosine + L-methionine + 2 oxidized [2Fe-2S]-[ferredoxin] + S-adenosyl-L-homocysteine. Functionally, specifically methylates position 2 of adenine 2503 in 23S rRNA and position 2 of adenine 37 in tRNAs. The chain is Probable dual-specificity RNA methyltransferase RlmN from Clostridium acetobutylicum (strain ATCC 824 / DSM 792 / JCM 1419 / IAM 19013 / LMG 5710 / NBRC 13948 / NRRL B-527 / VKM B-1787 / 2291 / W).